Consider the following 101-residue polypeptide: Small ribosomal subunit protein uS17 (101 aa).

It belongs to the universal ribosomal protein uS17 family. In terms of assembly, part of the 30S ribosomal subunit.

Its function is as follows. One of the primary rRNA binding proteins, it binds specifically to the 5'-end of 16S ribosomal RNA. The polypeptide is Small ribosomal subunit protein uS17 (Leifsonia xyli subsp. xyli (strain CTCB07)).